The following is a 1023-amino-acid chain: 1-phosphatidylinositol 4,5-bisphosphate phosphodiesterase beta-4 (1023 aa).

Positions 149 to 299 (QEMDHPLAHY…LKRKILIKKQ (151 aa)) constitute a PI-PLC X-box domain. Residues histidine 164 and histidine 211 contribute to the active site. Positions 413-529 (LSTMINYAQP…GYLLKPDFMR (117 aa)) constitute a PI-PLC Y-box domain. One can recognise a C2 domain in the interval 532–657 (DRTFDPFSET…SLRNEGNKPL (126 aa)). Disordered regions lie at residues 711–742 (ADVPSDTSKNDKKGKANTAKANVTPQSSSELR) and 930–958 (KISMENSKAISQDKSIKNKAERERRVREL). 2 stretches are compositionally biased toward polar residues: residues 729–742 (AKANVTPQSSSELR) and 933–942 (MENSKAISQD). At threonine 734 the chain carries Phosphothreonine. The segment covering 943-957 (KSIKNKAERERRVRE) has biased composition (basic and acidic residues).

Requires Ca(2+) as cofactor. The N-terminus is blocked. Preferentially expressed in the retina.

Its subcellular location is the cell membrane. It catalyses the reaction a 1,2-diacyl-sn-glycero-3-phospho-(1D-myo-inositol-4,5-bisphosphate) + H2O = 1D-myo-inositol 1,4,5-trisphosphate + a 1,2-diacyl-sn-glycerol + H(+). The enzyme catalyses a 1,2-diacyl-sn-glycero-3-phospho-(1D-myo-inositol) + H2O = 1D-myo-inositol 1-phosphate + a 1,2-diacyl-sn-glycerol + H(+). Activated phosphatidylinositol-specific phospholipase C enzymes catalyze the production of the second messenger molecules diacylglycerol (DAG) and inositol 1,4,5-trisphosphate (IP3) involved in G-protein coupled receptor signaling pathways. PLCB4 is a direct effector of the endothelin receptor signaling pathway that plays an essential role in lower jaw and middle ear structures development. In Bos taurus (Bovine), this protein is 1-phosphatidylinositol 4,5-bisphosphate phosphodiesterase beta-4 (PLCB4).